A 288-amino-acid polypeptide reads, in one-letter code: Pantothenate synthetase (288 aa).

31–38 (MGNLHRGH) is an ATP binding site. Catalysis depends on His-38, which acts as the Proton donor. Gln-62 is a binding site for (R)-pantoate. Gln-62 is a binding site for beta-alanine. 150–153 (GQKD) lines the ATP pocket. Gln-156 lines the (R)-pantoate pocket. Residues Ile-179 and 187 to 190 (LSSR) contribute to the ATP site.

The protein belongs to the pantothenate synthetase family. In terms of assembly, homodimer.

It is found in the cytoplasm. It carries out the reaction (R)-pantoate + beta-alanine + ATP = (R)-pantothenate + AMP + diphosphate + H(+). The protein operates within cofactor biosynthesis; (R)-pantothenate biosynthesis; (R)-pantothenate from (R)-pantoate and beta-alanine: step 1/1. Catalyzes the condensation of pantoate with beta-alanine in an ATP-dependent reaction via a pantoyl-adenylate intermediate. This Wigglesworthia glossinidia brevipalpis protein is Pantothenate synthetase.